Here is a 213-residue protein sequence, read N- to C-terminus: V-type proton ATPase subunit c'' (213 aa).

The Vacuolar segment spans residues 1-14 (MNKESKDDDMSLGK). Residues 15–35 (FSFSHFLYYLVLIVVIVYGLY) form a helical membrane-spanning segment. Residues 36–61 (KLFTGHGSDINFGKFLLRTSPYMWAN) are Cytoplasmic-facing. The chain crosses the membrane as a helical span at residues 62-82 (LGIALCVGLSVVGAAWGIFIT). Topologically, residues 83-100 (GSSMIGAGVRAPRITTKN) are vacuolar. Residues 101–121 (LISIIFCEVVAIYGLIIAIVF) form a helical membrane-spanning segment. Residues 122–144 (SSKLTVATAENMYSKSNLYTGYS) lie on the Cytoplasmic side of the membrane. A helical transmembrane segment spans residues 145–165 (LFWAGITVGASNLICGIAVGI). The Vacuolar portion of the chain corresponds to 166 to 183 (TGATAAISDAADSALFVK). Residues 184-204 (ILVIEIFGSILGLLGLIVGLL) form a helical membrane-spanning segment. Topologically, residues 205–213 (MAGKASEFQ) are cytoplasmic.

Belongs to the V-ATPase proteolipid subunit family. V-ATPase is a heteromultimeric enzyme composed of a peripheral catalytic V1 complex (components A to H) attached to an integral membrane V0 proton pore complex (components: a, c, c', c'', d, e, f and VOA1). The decameric c-ring forms the proton-conducting pore, and is composed of eight proteolipid subunits c, one subunit c' and one subunit c''.

The protein resides in the vacuole membrane. Its function is as follows. Proton-conducting pore forming subunit of the V0 complex of vacuolar(H+)-ATPase (V-ATPase), a multisubunit enzyme composed of a peripheral complex (V1) that hydrolyzes ATP and a membrane integral complex (V0) that translocates protons. V-ATPase is responsible for acidifying and maintaining the pH of intracellular compartments. The sequence is that of V-type proton ATPase subunit c'' (VMA16) from Saccharomyces cerevisiae (strain ATCC 204508 / S288c) (Baker's yeast).